The following is a 433-amino-acid chain: Alpha-(1,3)-fucosyltransferase 4 (433 aa).

The tract at residues 1–20 (MAPAGRKLQHESRCRPSRPV) is disordered. The Cytoplasmic portion of the chain corresponds to 1-54 (MAPAGRKLQHESRCRPSRPVDAWRAAATTRGRCMGTPGARRTARRGGWGLPRTS). Residues 55-74 (SGLAAAGLLCTALTACLCWG) traverse the membrane as a helical; Signal-anchor for type II membrane protein segment. The Lumenal segment spans residues 75-433 (QLPPLPWASP…IHNLADWFQR (359 aa)). 2 N-linked (GlcNAc...) asparagine glycosylation sites follow: asparagine 117 and asparagine 218.

It belongs to the glycosyltransferase 10 family. As to expression, in adult, highest expression in spleen, testis, brain, lung, kidney and skeletal muscle and to a lesser extent in liver and heart.

Its subcellular location is the golgi apparatus. It is found in the golgi stack membrane. It catalyses the reaction a beta-D-galactosyl-(1-&gt;4)-N-acetyl-beta-D-glucosaminyl derivative + GDP-beta-L-fucose = a beta-D-galactosyl-(1-&gt;4)-[alpha-L-fucosyl-(1-&gt;3)]-N-acetyl-beta-D-glucosaminyl derivative + GDP + H(+). The catalysed reaction is an N-acetyl-alpha-neuraminyl-(2-&gt;3)-beta-D-galactosyl-(1-&gt;4)-N-acetyl-beta-D-glucosaminyl derivative + GDP-beta-L-fucose = an alpha-Neu5Ac-(2-&gt;3)-beta-D-Gal-(1-&gt;4)-[alpha-L-Fuc-(1-&gt;3)]-beta-D-GlcNAc derivative + GDP + H(+). It carries out the reaction an alpha-Neu5Ac-(2-&gt;3)-beta-D-Gal-(1-&gt;4)-beta-D-GlcNAc-(1-&gt;3)-beta-D-Gal-(1-&gt;4)-beta-D-GlcNAc derivative + GDP-beta-L-fucose = an alpha-Neu5Ac-(2-&gt;3)-beta-D-Gal-(1-&gt;4)-beta-D-GlcNAc-(1-&gt;3)-beta-D-Gal-(1-&gt;4)-[alpha-L-Fuc-(1-&gt;3)]-beta-D-GlcNAc derivative + GDP + H(+). The enzyme catalyses an alpha-Neu5Ac-(2-&gt;3)-beta-D-Gal-(1-&gt;4)-beta-D-GlcNAc6S derivative + GDP-beta-L-fucose = an alpha-Neu5Ac-(2-&gt;3)-beta-D-Gal-(1-&gt;4)-[alpha-L-Fuc-(1-&gt;3)]-beta-D-GlcNAc6S derivative + GDP + H(+). It participates in protein modification; protein glycosylation. Its function is as follows. Catalyzes alpha(1-&gt;3) linkage of fucosyl moiety transferred from GDP-beta-L-fucose to N-acetyl glucosamine (GlcNAc) within type 2 lactosamine (LacNAc, Gal-beta(1-&gt;4)GlcNAc) glycan attached to N- or O-linked glycoproteins. Robustly fucosylates nonsialylated distal LacNAc unit of the polylactosamine chain to form Lewis X antigen (CD15), a glycan determinant known to mediate important cellular functions in development and immunity. Fucosylates with lower efficiency sialylated LacNAc acceptors to form sialyl Lewis X and 6-sulfo sialyl Lewis X determinants that serve as recognition epitopes for C-type lectins. Together with FUT7 contributes to SELE, SELL and SELP selectin ligand biosynthesis and selectin-dependent lymphocyte homing, leukocyte migration and blood leukocyte homeostasis. In a cell type specific manner, may also fucosylate the internal LacNAc unit of the polylactosamine chain to form VIM-2 antigen that serves as recognition epitope for SELE. The sequence is that of Alpha-(1,3)-fucosyltransferase 4 (Fut4) from Rattus norvegicus (Rat).